Reading from the N-terminus, the 448-residue chain is Noelin-2 (448 aa).

The N-terminal stretch at 1–14 (MRKLRQTGTTIAGG) is a signal peptide. 2 coiled-coil regions span residues 52-79 (RDGRSRELRQLMEKVQNVSQSMEVLELR) and 130-187 (LEQY…AQKL). 6 N-linked (GlcNAc...) asparagine glycosylation sites follow: Asn-68, Asn-149, Asn-269, Asn-304, Asn-393, and Asn-435. Residues 188 to 440 (GCGKLTGVSN…QVLYNVTLFH (253 aa)) enclose the Olfactomedin-like domain. Cysteines 189 and 371 form a disulfide.

In terms of assembly, peripherally associated with AMPAR complex. AMPAR complex consists of an inner core made of 4 pore-forming GluA/GRIA proteins (GRIA1, GRIA2, GRIA3 and GRIA4) and 4 major auxiliary subunits arranged in a twofold symmetry. One of the two pairs of distinct binding sites is occupied either by CNIH2, CNIH3 or CACNG2, CACNG3. The other harbors CACNG2, CACNG3, CACNG4, CACNG8 or GSG1L. This inner core of AMPAR complex is complemented by outer core constituents binding directly to the GluA/GRIA proteins at sites distinct from the interaction sites of the inner core constituents. Outer core constituents include at least PRRT1, PRRT2, CKAMP44/SHISA9, FRRS1L and NRN1. The proteins of the inner and outer core serve as a platform for other, more peripherally associated AMPAR constituents, including OLFM2. Alone or in combination, these auxiliary subunits control the gating and pharmacology of the AMPAR complex and profoundly impact their biogenesis and protein processing. Interacts with GRIA2. Interacts with OLFM1 and OLFM3. Interacts with SRF; the interaction promotes dissociation of SRF from the transcriptional repressor HEY2. Interacts with RUNX2. Expressed in the brain (at protein level). In the developing eye, first detected at 12 dpc in the retinal pigmented epithelium and preferentially expressed in differentiating retinal ganglion cells between 15 and 18 dpc. In the brain, expression is detected mainly in the olfactory bulb, cortex, piriform cortex, olfactory trabeculae, and inferior and superior colliculus. In the adult eye, expression is detected mainly in retinal ganglion cells. Expressed in carotid arteries.

Its subcellular location is the secreted. It localises to the synapse. The protein localises to the membrane. The protein resides in the nucleus. It is found in the cytoplasm. Its function is as follows. Involved in transforming growth factor beta (TGF-beta)-induced smooth muscle differentiation. TGF-beta induces expression and nuclear translocation of OLFM2 where it binds to SRF, causing its dissociation from the transcriptional repressor HEY2/HERP1 and facilitating binding of SRF to target genes. Plays a role in AMPAR complex organization. Is a regulator of vascular smooth-muscle cell (SMC) phenotypic switching, that acts by promoting RUNX2 and inhibiting MYOCD binding to SRF. SMC phenotypic switching is the process through which vascular SMCs undergo transition between a quiescent contractile phenotype and a proliferative synthetic phenotype in response to pathological stimuli. SMC phenotypic plasticity is essential for vascular development and remodeling. The sequence is that of Noelin-2 (Olfm2) from Mus musculus (Mouse).